A 447-amino-acid chain; its full sequence is Adenylosuccinate synthetase (447 aa).

GTP contacts are provided by residues glycine 35 to lysine 41 and glycine 63 to threonine 65. Aspartate 36 functions as the Proton acceptor in the catalytic mechanism. Positions 36 and 63 each coordinate Mg(2+). Residues aspartate 36 to lysine 39, asparagine 61 to histidine 64, threonine 153, arginine 167, asparagine 245, threonine 260, and arginine 324 contribute to the IMP site. Histidine 64 acts as the Proton donor in catalysis. Valine 320–arginine 326 serves as a coordination point for substrate. Residues arginine 326, lysine 352–aspartate 354, and glycine 435–glycine 437 contribute to the GTP site.

The protein belongs to the adenylosuccinate synthetase family. In terms of assembly, homodimer. Mg(2+) serves as cofactor.

It localises to the cytoplasm. It catalyses the reaction IMP + L-aspartate + GTP = N(6)-(1,2-dicarboxyethyl)-AMP + GDP + phosphate + 2 H(+). The protein operates within purine metabolism; AMP biosynthesis via de novo pathway; AMP from IMP: step 1/2. Plays an important role in the de novo pathway and in the salvage pathway of purine nucleotide biosynthesis. Catalyzes the first committed step in the biosynthesis of AMP from IMP. The protein is Adenylosuccinate synthetase of Drosophila erecta (Fruit fly).